The chain runs to 153 residues: Small ribosomal subunit protein bS16 (153 aa).

Residues 130-153 (EAEAAAAAEEAPAEEAAEEAPAEA) are disordered. Over residues 140–153 (APAEEAAEEAPAEA) the composition is skewed to acidic residues.

It belongs to the bacterial ribosomal protein bS16 family.

The sequence is that of Small ribosomal subunit protein bS16 from Bifidobacterium longum (strain NCC 2705).